A 152-amino-acid polypeptide reads, in one-letter code: Protein FYV5 (152 aa).

Transmembrane regions (helical) follow at residues 26 to 46 (IISI…RICS), 56 to 76 (LISS…SCVL), 82 to 102 (VGII…VLFL), 106 to 126 (LIDL…TPFF), and 127 to 147 (FMLH…YLII).

It localises to the cell membrane. The protein resides in the secreted. The protein localises to the cell wall. Functionally, involved in maintaining an adequate ionic strength homeostasis of the cellular aqueous environment, necessary for normal growth rate. Required for survival upon exposure to K1 killer toxin and hence plays a role in cell wall glucan synthesis. Required for dithiothreitol (DTT) resistance. Involved in cell cycle progression. In Saccharomyces cerevisiae (strain ATCC 204508 / S288c) (Baker's yeast), this protein is Protein FYV5 (FYV5).